A 232-amino-acid polypeptide reads, in one-letter code: Ribose-5-phosphate isomerase A (232 aa).

Residues T28–T31, D83–D86, and K96–G99 contribute to the substrate site. E105 acts as the Proton acceptor in catalysis. K123 lines the substrate pocket.

This sequence belongs to the ribose 5-phosphate isomerase family. In terms of assembly, homodimer.

The enzyme catalyses aldehydo-D-ribose 5-phosphate = D-ribulose 5-phosphate. Its pathway is carbohydrate degradation; pentose phosphate pathway; D-ribose 5-phosphate from D-ribulose 5-phosphate (non-oxidative stage): step 1/1. Its function is as follows. Catalyzes the reversible conversion of ribose-5-phosphate to ribulose 5-phosphate. The sequence is that of Ribose-5-phosphate isomerase A from Rhizobium etli (strain ATCC 51251 / DSM 11541 / JCM 21823 / NBRC 15573 / CFN 42).